We begin with the raw amino-acid sequence, 189 residues long: Protein sisterless A (189 aa).

The segment at 93 to 124 (DCRGSGSGSGSGSGSDVKDAQRQRAESCRKSR) is disordered. A compositionally biased stretch (basic and acidic residues) spans 108 to 121 (DVKDAQRQRAESCR).

Homodimer. Interacts with dpn (via bHLH motif). Interacts with da (via bHLH motif). Interacts with Bap60. As to expression, localizes to all the embryonic nuclei until nuclear cycle 9, when expression ceases in the prepole cell nuclei. Associates with the somatic nuclei through cycle 10. By nuclear cycle 12, distributes uniformly in the somatic portion of the embryo and no longer associates with the nuclei. After early cycle 14 (beginning of cellularization) there is very little or no expression in the periphery of the embryo or in either the somatic or germ cells. In the yolk, accumulates at the nuclei from nuclear cycle 8 until 10-11 hours after fertilization.

It is found in the nucleus. Involved in sex determination and dosage compensation. Required for proper expression of Sxl in embryonic somatic cells. Also has an essential function in the yolk nuclei. Involved in endoderm migration and midgut formation. The polypeptide is Protein sisterless A (sisA) (Drosophila melanogaster (Fruit fly)).